A 459-amino-acid chain; its full sequence is tRNA modification GTPase MnmE (459 aa).

Residues arginine 23, glutamate 88, and arginine 127 each contribute to the (6S)-5-formyl-5,6,7,8-tetrahydrofolate site. The TrmE-type G domain occupies 223-381; it reads GLDVVIVGKP…LKEYIKDLFF (159 aa). Asparagine 233 is a K(+) binding site. GTP is bound by residues 233–238, 252–258, and 277–280; these read NVGKSS, TEIPGTT, and DTAG. Residue serine 237 participates in Mg(2+) binding. Residues threonine 252, isoleucine 254, and threonine 257 each coordinate K(+). Residue threonine 258 coordinates Mg(2+). Lysine 459 contacts (6S)-5-formyl-5,6,7,8-tetrahydrofolate.

It belongs to the TRAFAC class TrmE-Era-EngA-EngB-Septin-like GTPase superfamily. TrmE GTPase family. In terms of assembly, homodimer. Heterotetramer of two MnmE and two MnmG subunits. Requires K(+) as cofactor.

The protein resides in the cytoplasm. Its function is as follows. Exhibits a very high intrinsic GTPase hydrolysis rate. Involved in the addition of a carboxymethylaminomethyl (cmnm) group at the wobble position (U34) of certain tRNAs, forming tRNA-cmnm(5)s(2)U34. The polypeptide is tRNA modification GTPase MnmE (Clostridium tetani (strain Massachusetts / E88)).